The primary structure comprises 93 residues: Large ribosomal subunit protein uL23cz/uL23cy (93 aa).

This sequence belongs to the universal ribosomal protein uL23 family. In terms of assembly, part of the 50S ribosomal subunit.

Its subcellular location is the plastid. It is found in the chloroplast. Binds to 23S rRNA. The protein is Large ribosomal subunit protein uL23cz/uL23cy (rpl23-A) of Oenothera elata subsp. hookeri (Hooker's evening primrose).